A 147-amino-acid chain; its full sequence is Large ribosomal subunit protein bL9 (147 aa).

This sequence belongs to the bacterial ribosomal protein bL9 family.

In terms of biological role, binds to the 23S rRNA. The protein is Large ribosomal subunit protein bL9 of Halalkalibacterium halodurans (strain ATCC BAA-125 / DSM 18197 / FERM 7344 / JCM 9153 / C-125) (Bacillus halodurans).